The sequence spans 428 residues: Spliceosome RNA helicase DDX39B (428 aa).

Residues 1–19 show a composition bias toward acidic residues; the sequence is MAENDVDNELLDYEEDEVE. The disordered stretch occupies residues 1 to 35; sequence MAENDVDNELLDYEEDEVENAAGGDGSEAPPKKDV. The short motif at 45–73 is the Q motif element; that stretch reads SGFRDFLLKPELLRAIVDCGFEHPSEVQH. In terms of domain architecture, Helicase ATP-binding spans 76–249; it reads IPQAILGMDV…RKFMQDPMEI (174 aa). 89-96 provides a ligand contact to ATP; that stretch reads AKSGMGKT. The DECD box motif lies at 196 to 199; sequence DECD. The region spanning 261–422 is the Helicase C-terminal domain; sequence GLQQYYVKLK…ELPDEIDISS (162 aa).

The protein belongs to the DEAD box helicase family. DECD subfamily. Component of the transcription/export (TREX) complex at least composed of ALYREF/THOC4, DDX39B, SARNP/CIP29, CHTOP and the THO subcomplex.

It is found in the nucleus. Its subcellular location is the nucleus speckle. The enzyme catalyses ATP + H2O = ADP + phosphate + H(+). Functionally, involved in nuclear export of spliced and unspliced mRNA. Component of the TREX complex which is thought to couple mRNA transcription, processing and nuclear export, and specifically associates with spliced mRNA and not with unspliced pre-mRNA. The TREX complex is recruited to spliced mRNAs by a transcription-independent mechanism, binds to mRNA upstream of the exon-junction complex (EJC) and is recruited in a splicing- and cap-dependent manner to a region near the 5' end of the mRNA where it functions in mRNA export to the cytoplasm via the TAP/NXF1 pathway. Involved in transcription elongation and genome stability. Its function is as follows. Splice factor that is required for the first ATP-dependent step in spliceosome assembly and for the interaction of U2 snRNP with the branchpoint. Has both RNA-stimulated ATP binding/hydrolysis activity and ATP-dependent RNA unwinding activity. Even with the stimulation of RNA, the ATPase activity is weak. Can only hydrolyze ATP but not other NTPs. The RNA stimulation of ATPase activity does not have a strong preference for the sequence and length of the RNA. However, ssRNA stimulates the ATPase activity much more strongly than dsRNA. Can unwind 5' or 3' overhangs or blunt end RNA duplexes in vitro. The ATPase and helicase activities are not influenced by U2AF2; the effect of ALYREF/THOC4 is reported conflictingly. The protein is Spliceosome RNA helicase DDX39B (DDX39B) of Gallus gallus (Chicken).